The following is an 89-amino-acid chain: Sodium channel toxin To13 (89 aa).

A signal peptide spans 1-18; the sequence is MKTLFLIITSFILLEVEG. The region spanning 20-87 is the LCN-type CS-alpha/beta domain; that stretch reads KNGYPRDSKG…TWKNKEPKCK (68 aa). 4 disulfide bridges follow: cysteine 30-cysteine 86, cysteine 34-cysteine 60, cysteine 45-cysteine 67, and cysteine 49-cysteine 69.

Belongs to the long (4 C-C) scorpion toxin superfamily. Sodium channel inhibitor family. In terms of tissue distribution, expressed by the venom gland.

The protein resides in the secreted. Its function is as follows. Inhibits voltage-gated sodium channels (Nav). This Tityus obscurus (Amazonian scorpion) protein is Sodium channel toxin To13.